Consider the following 291-residue polypeptide: Nucleotide-binding protein RALTA_A0325 (291 aa).

Position 8-15 (8-15 (GISGSGKS)) interacts with ATP. 57–60 (DIRS) lines the GTP pocket.

This sequence belongs to the RapZ-like family.

In terms of biological role, displays ATPase and GTPase activities. The polypeptide is Nucleotide-binding protein RALTA_A0325 (Cupriavidus taiwanensis (strain DSM 17343 / BCRC 17206 / CCUG 44338 / CIP 107171 / LMG 19424 / R1) (Ralstonia taiwanensis (strain LMG 19424))).